A 646-amino-acid chain; its full sequence is Cysteine-rich receptor-like protein kinase 37 (646 aa).

Residues 1–26 (MGKSCVVTSSFSLLLLFLQTLKYVHA) form the signal peptide. Gnk2-homologous domains lie at 27-132 (GFIC…NHST) and 142-252 (TINP…LYPY). Residues 27 to 287 (GFICYGDFFN…RDEKSFQGSN (261 aa)) lie on the Extracellular side of the membrane. N-linked (GlcNAc...) asparagine glycans are attached at residues Asn-62, Asn-129, Asn-169, and Asn-180. A helical membrane pass occupies residues 288 to 308 (IAIIVVPSVINLIIFVVLIFS). Over 309–646 (WKRKQSHTII…LTRPSLSLGH (338 aa)) the chain is Cytoplasmic. Positions 345 to 626 (FSLENKLGQG…LFWLERHATI (282 aa)) constitute a Protein kinase domain. Residues 351–359 (LGQGGFGSV) and Lys-373 contribute to the ATP site. A Phosphotyrosine modification is found at Tyr-418. The Proton acceptor role is filled by Asp-470. Ser-474 is modified (phosphoserine). Thr-510 bears the Phosphothreonine mark. Phosphotyrosine is present on Tyr-518.

This sequence belongs to the protein kinase superfamily. Ser/Thr protein kinase family. CRK subfamily.

The protein resides in the membrane. The enzyme catalyses L-seryl-[protein] + ATP = O-phospho-L-seryl-[protein] + ADP + H(+). It carries out the reaction L-threonyl-[protein] + ATP = O-phospho-L-threonyl-[protein] + ADP + H(+). The chain is Cysteine-rich receptor-like protein kinase 37 (CRK37) from Arabidopsis thaliana (Mouse-ear cress).